Here is an 851-residue protein sequence, read N- to C-terminus: Receptor like protein kinase S.2 (851 aa).

A Protein kinase 1 domain is found at 117–436; sequence FSDELILGSG…LPSFKSHPLY (320 aa). ATP is bound by residues 123–131 and K146; that span reads LGSGGFGRV. The active-site Proton acceptor is D248. Positions 448–471 are disordered; the sequence is SATTTTTRTTMTTTTSTTSFNASS. Positions 532–819 constitute a Protein kinase 2 domain; that stretch reads FSDARRVAEV…SILDGSERFF (288 aa). ATP is bound by residues 538–546 and K560; that span reads VAEVDFGTA.

Belongs to the protein kinase superfamily. Ser/Thr protein kinase family.

The catalysed reaction is L-seryl-[protein] + ATP = O-phospho-L-seryl-[protein] + ADP + H(+). It carries out the reaction L-threonyl-[protein] + ATP = O-phospho-L-threonyl-[protein] + ADP + H(+). This chain is Receptor like protein kinase S.2 (LECRKS2), found in Arabidopsis thaliana (Mouse-ear cress).